We begin with the raw amino-acid sequence, 500 residues long: Keratin, type II cuticular Hb1 (500 aa).

The segment at Met-1–Glu-106 is head. Residues Glu-106 to Leu-417 form the IF rod domain. The segment at Lys-107–Tyr-141 is coil 1A. Positions Gln-142–Leu-151 are linker 1. Residues Glu-152 to Ala-252 are coil 1B. A Glycyl lysine isopeptide (Lys-Gly) (interchain with G-Cter in SUMO1) cross-link involves residue Lys-212. Residues His-253–Leu-269 are linker 12. The segment at Asn-270–Glu-413 is coil 2. Residues Glu-414–Cys-500 form a tail region.

The protein belongs to the intermediate filament family. In terms of assembly, heterotetramer of two type I and two type II keratins.

This Bos taurus (Bovine) protein is Keratin, type II cuticular Hb1.